Reading from the N-terminus, the 171-residue chain is UPF0398 protein M28_Spy1394 (171 aa).

It belongs to the UPF0398 family.

In Streptococcus pyogenes serotype M28 (strain MGAS6180), this protein is UPF0398 protein M28_Spy1394.